The chain runs to 158 residues: Persistence and stress-resistance toxin PasT (158 aa).

Residues 70–158 (GISKTFTTRN…VRAKEVYSAR (89 aa)) are required for resistance of nitrosative stress but not persistence or toxic effects.

Belongs to the ribosome association toxin RatA family. In terms of assembly, associates with 50S ribosomes.

Functionally, toxic component of a type II toxin-antitoxin (TA) system. Binds to 50S ribosomal subunits, preventing them from associating with 30S subunits to form 70S ribosomes. In this strain of E.coli low levels of PasT complement operon disruption, however high levels are toxic; their effects are abrogated by high level expression of cognate antitoxin PasI. Plays a role in persistence after antibiotic exposure and survival of nitrosative stress; the toxic and persistence phenotypes are conferred by the same N-terminal region of the protein, while the stress resistance effects can be uncoupled from them in deletion mutants. This chain is Persistence and stress-resistance toxin PasT (pasT), found in Escherichia coli O6:H1 (strain CFT073 / ATCC 700928 / UPEC).